Reading from the N-terminus, the 177-residue chain is MPVIEKKRTRDLPQINERIRFPKIRVIDTDGAQLGIMPPQEALQLAEEKELDLVLISDKADPPVCRIMDYGKYKFEQEKKAREARKKQHTADVKEVKMRYKIEEHDYNVRVKQAERFLKDGDKVKATVMFRGREIQHSDLAEDLLKRMATDLEPFGELQQAPKKEGRNMMMLISPKK.

It belongs to the IF-3 family. Monomer.

It is found in the cytoplasm. Its function is as follows. IF-3 binds to the 30S ribosomal subunit and shifts the equilibrium between 70S ribosomes and their 50S and 30S subunits in favor of the free subunits, thus enhancing the availability of 30S subunits on which protein synthesis initiation begins. This Nostoc punctiforme (strain ATCC 29133 / PCC 73102) protein is Translation initiation factor IF-3.